A 531-amino-acid polypeptide reads, in one-letter code: Chaperonin GroEL 2 (531 aa).

Residues 30-33, 87-91, glycine 414, and aspartate 494 each bind ATP; these read TLGP and DGTTT.

This sequence belongs to the chaperonin (HSP60) family. Forms a cylinder of 14 subunits composed of two heptameric rings stacked back-to-back. Interacts with the co-chaperonin GroES.

It is found in the cytoplasm. It catalyses the reaction ATP + H2O + a folded polypeptide = ADP + phosphate + an unfolded polypeptide.. Its function is as follows. Together with its co-chaperonin GroES, plays an essential role in assisting protein folding. The GroEL-GroES system forms a nano-cage that allows encapsulation of the non-native substrate proteins and provides a physical environment optimized to promote and accelerate protein folding. The polypeptide is Chaperonin GroEL 2 (Cutibacterium acnes (strain DSM 16379 / KPA171202) (Propionibacterium acnes)).